The primary structure comprises 851 residues: Meiotically up-regulated gene 87 protein (851 aa).

Belongs to the nucleoporin interacting component (NIC) family.

The protein resides in the nucleus envelope. Has a role in meiosis. The chain is Meiotically up-regulated gene 87 protein (mug87) from Schizosaccharomyces pombe (strain 972 / ATCC 24843) (Fission yeast).